Consider the following 319-residue polypeptide: HTH-type transcriptional regulator YidZ (319 aa).

In terms of domain architecture, HTH lysR-type spans leucine 8–threonine 65. The segment at residues valine 25–alanine 44 is a DNA-binding region (H-T-H motif).

It belongs to the LysR transcriptional regulatory family.

Its function is as follows. Involved in anaerobic NO protection. The protein is HTH-type transcriptional regulator YidZ of Escherichia coli O139:H28 (strain E24377A / ETEC).